Reading from the N-terminus, the 305-residue chain is tRNA dimethylallyltransferase (305 aa).

13-20 (GPTSSGKT) serves as a coordination point for ATP. Substrate is bound at residue 15 to 20 (TSSGKT). Residues 39 to 42 (DSKQ) are interaction with substrate tRNA.

The protein belongs to the IPP transferase family. As to quaternary structure, monomer. The cofactor is Mg(2+).

The enzyme catalyses adenosine(37) in tRNA + dimethylallyl diphosphate = N(6)-dimethylallyladenosine(37) in tRNA + diphosphate. In terms of biological role, catalyzes the transfer of a dimethylallyl group onto the adenine at position 37 in tRNAs that read codons beginning with uridine, leading to the formation of N6-(dimethylallyl)adenosine (i(6)A). The protein is tRNA dimethylallyltransferase of Neorickettsia sennetsu (strain ATCC VR-367 / Miyayama) (Ehrlichia sennetsu).